The primary structure comprises 269 residues: MGSVNFITHADVLQLIAKRTAEDCIIFLSGPTSRKTPLSLLRMKDVIAVNGSVQYLLNNNVKPFLYLLTDIRFLHRRREDFYNFSRNSQFTIVNLDVYEQASVDDQKYIEENCLIIRSFYRREKGGFLKKIKFNILKRVHKALLISVPLSKRGRLAGFCKDISIGYCSCHTIAYTAIQVAYSLKYGRIICSGLDLTGSCPRFYDESTSPMPSELSKDLFKILPFFTFMRKNVSDLNIFNLSDDTAIHYDIIPYITASELEDEIYYDKIV.

It is found in the cytoplasm. It catalyses the reaction an alpha-Kdo-(2-&gt;4)-alpha-Kdo-(2-&gt;6)-lipid IVA + CMP-3-deoxy-beta-D-manno-octulosonate = an alpha-Kdo-(2-&gt;4)-alpha-Kdo-(2-&gt;4)-alpha-Kdo-(2-&gt;6)-lipid IVA + CMP + H(+). Its pathway is bacterial outer membrane biogenesis; LPS core biosynthesis. Functionally, involved in the biosynthesis of the core oligosaccharide region of lipopolysaccharide (LPS). Required for the addition of 3-deoxy-D-manno-oct-2-ulosonic acid III (KdoIII) to the KdoII residue of the inner lipopolysaccharide core. The protein is Probable 3-deoxy-manno-octulosonic acid transferase of Salmonella typhimurium (strain LT2 / SGSC1412 / ATCC 700720).